The sequence spans 1135 residues: Putative beta-hexosaminidase (1135 aa).

Positions M1–S23 are cleaved as a signal peptide. 2 disordered regions span residues A970–Q1082 and Q1107–G1135. Pro residues predominate over residues N986–P1003. 2 stretches are compositionally biased toward low complexity: residues P1004–G1026 and T1043–Q1073.

This sequence belongs to the glycosyl hydrolase 20 family. Prismatic layer of shell (at protein level). Expressed primarily in the mantle with highest level in the mantle edge and lower level in the mantle pallium.

The protein resides in the secreted. It carries out the reaction Hydrolysis of terminal non-reducing N-acetyl-D-hexosamine residues in N-acetyl-beta-D-hexosaminides.. Its pathway is glycan degradation; chitin degradation. In Margaritifera margaritifera (Freshwater pearl mussel), this protein is Putative beta-hexosaminidase.